The chain runs to 533 residues: Spindle pole body protein CSA6 (533 aa).

2 disordered regions span residues methionine 1 to threonine 32 and aspartate 53 to glutamate 130. Basic and acidic residues-rich tracts occupy residues proline 18–aspartate 30 and aspartate 53–proline 68. The segment covering proline 83–proline 94 has biased composition (low complexity). The segment covering serine 103–asparagine 121 has biased composition (polar residues). Positions lysine 136–aspartate 236 form a coiled coil. A compositionally biased stretch (basic and acidic residues) spans glutamate 309–threonine 318. 2 disordered regions span residues glutamate 309 to alanine 329 and serine 349 to lysine 453. 2 stretches are compositionally biased toward polar residues: residues serine 349–glutamine 392 and isoleucine 405–histidine 421. Over residues proline 432–serine 445 the composition is skewed to basic and acidic residues.

Its subcellular location is the cytoplasm. It is found in the cytoskeleton. The protein resides in the microtubule organizing center. The protein localises to the spindle pole body. Plays a role in mitotic spindle pole body organization, possibly at the point of spindle pole body separation. Required for mitotic exit. The protein is Spindle pole body protein CSA6 of Candida dubliniensis (strain CD36 / ATCC MYA-646 / CBS 7987 / NCPF 3949 / NRRL Y-17841) (Yeast).